A 468-amino-acid chain; its full sequence is Mothers against decapentaplegic homolog 2 (468 aa).

The region spanning Pro-10–Pro-177 is the MH1 domain. Positions 75, 150, 162, and 167 each coordinate Zn(2+). Residues Pro-224–Thr-254 are disordered. A compositionally biased stretch (polar residues) spans Ser-234–Thr-244. The region spanning Trp-275–Ser-468 is the MH2 domain.

It belongs to the dwarfin/SMAD family.

The protein resides in the cytoplasm. The protein localises to the nucleus. Promotes differentiation of dorsal tissues. May be involved in the mediation of Ndr2 signaling during mesoderm and axis formation during embryogenesis. In Danio rerio (Zebrafish), this protein is Mothers against decapentaplegic homolog 2 (smad2).